Here is a 143-residue protein sequence, read N- to C-terminus: Transcriptional regulator MraZ (143 aa).

2 SpoVT-AbrB domains span residues 5 to 47 and 76 to 119; these read EYSH…PQKE and AAEC…SQEL.

It belongs to the MraZ family. As to quaternary structure, forms oligomers.

It is found in the cytoplasm. Its subcellular location is the nucleoid. The chain is Transcriptional regulator MraZ from Carboxydothermus hydrogenoformans (strain ATCC BAA-161 / DSM 6008 / Z-2901).